Reading from the N-terminus, the 628-residue chain is Keratin, type II cytoskeletal 3 (628 aa).

Residues 1 to 21 (MSRQASKTSGGGSQGFSGRSA) are disordered. A head region spans residues 1–197 (MSRQASKTSG…DPQIGQVKAQ (197 aa)). Residues S13 and S56 each carry the phosphoserine modification. The segment at 198-233 (EREQIKTLNNKFASFIDKVRFLEQQNKVLETKWNLL) is coil 1A. An IF rod domain is found at 198-513 (EREQIKTLNN…KLLEGEEYRM (316 aa)). The linker 1 stretch occupies residues 234 to 254 (QQQGTSSISGTNNLEPLFENH). The tract at residues 255–346 (INYLRSYLDN…TLYDAELSQM (92 aa)) is coil 1B. K296 is modified (N6,N6-dimethyllysine). The segment at 347-370 (QSHISDTSVVLSMDNNRSLDLDSI) is linker 12. S364 is subject to Phosphoserine. Residues 371–509 (IAEVRAQYED…ATYRKLLEGE (139 aa)) are coil 2. A tail region spans residues 510 to 628 (EYRMSGECPS…SSQSSQRYSR (119 aa)). Positions 605–628 (SSASNRGGSIKFSQSSQSSQRYSR) are disordered. Low complexity predominate over residues 617 to 628 (SQSSQSSQRYSR).

The protein belongs to the intermediate filament family. As to quaternary structure, heterotetramer of two type I and two type II keratins. Keratin-3 associates with keratin-12. In terms of tissue distribution, cornea specific.

The polypeptide is Keratin, type II cytoskeletal 3 (KRT3) (Homo sapiens (Human)).